The chain runs to 150 residues: Ribonuclease H (150 aa).

The region spanning 1–146 (MPELFAYTDG…ADELARAGMA (146 aa)) is the RNase H type-1 domain. 4 residues coordinate Mg(2+): D9, E52, D74, and D138.

Belongs to the RNase H family. As to quaternary structure, monomer. Requires Mg(2+) as cofactor.

The protein resides in the cytoplasm. The catalysed reaction is Endonucleolytic cleavage to 5'-phosphomonoester.. Its function is as follows. Endonuclease that specifically degrades the RNA of RNA-DNA hybrids. This chain is Ribonuclease H, found in Roseobacter denitrificans (strain ATCC 33942 / OCh 114) (Erythrobacter sp. (strain OCh 114)).